The sequence spans 234 residues: Demethylmenaquinone methyltransferase (234 aa).

Residues Thr-58, Asp-79, and 104-105 (NA) each bind S-adenosyl-L-methionine.

Belongs to the class I-like SAM-binding methyltransferase superfamily. MenG/UbiE family.

It carries out the reaction a 2-demethylmenaquinol + S-adenosyl-L-methionine = a menaquinol + S-adenosyl-L-homocysteine + H(+). Its pathway is quinol/quinone metabolism; menaquinone biosynthesis; menaquinol from 1,4-dihydroxy-2-naphthoate: step 2/2. Functionally, methyltransferase required for the conversion of demethylmenaquinol (DMKH2) to menaquinol (MKH2). The sequence is that of Demethylmenaquinone methyltransferase from Lysinibacillus sphaericus (strain C3-41).